The chain runs to 466 residues: Fumarate hydratase class II (466 aa).

Residues 99–101 (SGT), 129–132 (HPND), 139–141 (SSN), and T187 contribute to the substrate site. H188 serves as the catalytic Proton donor/acceptor. Residue S318 is part of the active site. Residues S319 and 324–326 (KVN) each bind substrate.

Belongs to the class-II fumarase/aspartase family. Fumarase subfamily. As to quaternary structure, homotetramer.

It localises to the cytoplasm. The catalysed reaction is (S)-malate = fumarate + H2O. It participates in carbohydrate metabolism; tricarboxylic acid cycle; (S)-malate from fumarate: step 1/1. Functionally, involved in the TCA cycle. Catalyzes the stereospecific interconversion of fumarate to L-malate. In Thermus aquaticus, this protein is Fumarate hydratase class II.